Reading from the N-terminus, the 761-residue chain is uncharacterized protein (761 aa).

Position 1 is an N-acetylmethionine (methionine 1). Disordered regions lie at residues 1–82, 229–320, and 590–640; these read MEHQ…SSSS, SNII…SALA, and FNRA…PEQQ. Polar residues predominate over residues 13 to 27; sequence NSGSNRVTVYNGTTL. Low complexity predominate over residues 28 to 45; sequence PTMPKSATPTSSSTTVTT. Composition is skewed to polar residues over residues 244–259, 266–276, 590–604, and 627–640; these read TPVS…SSPE, NTTSSSSTSDH, FNRA…STDD, and SKNS…PEQQ.

Phosphorylated by CDC28.

This is an uncharacterized protein from Saccharomyces cerevisiae (strain ATCC 204508 / S288c) (Baker's yeast).